Reading from the N-terminus, the 282-residue chain is NAD(P)H-hydrate epimerase (282 aa).

Residues 1 to 53 (MSGLRTLLGLGLLVAGSRLPRIASRQSVCRAGPIWWGTQHRSSETMASAAVKY) constitute a mitochondrion transit peptide. One can recognise a YjeF N-terminal domain in the interval 59 to 269 (AQAVDEELFN…ALEKKYQLNL (211 aa)). 113–117 (NNGGD) is a binding site for (6S)-NADPHX. Residue N114 coordinates K(+). An N6-succinyllysine modification is found at K138. A K(+)-binding site is contributed by D179. Residues 183–189 (GFSFKGD) and D212 each bind (6S)-NADPHX. S215 is a binding site for K(+).

The protein belongs to the NnrE/AIBP family. As to quaternary structure, homodimer. Interacts with APOA1 and APOA2. K(+) serves as cofactor. In terms of processing, undergoes physiological phosphorylation during sperm capacitation, downstream to PKA activation.

It is found in the mitochondrion. The protein resides in the secreted. The catalysed reaction is (6R)-NADHX = (6S)-NADHX. It carries out the reaction (6R)-NADPHX = (6S)-NADPHX. Its function is as follows. Catalyzes the epimerization of the S- and R-forms of NAD(P)HX, a damaged form of NAD(P)H that is a result of enzymatic or heat-dependent hydration. This is a prerequisite for the S-specific NAD(P)H-hydrate dehydratase to allow the repair of both epimers of NAD(P)HX. Accelerates cholesterol efflux from endothelial cells to high-density lipoprotein (HDL) and thereby regulates angiogenesis. This Rattus norvegicus (Rat) protein is NAD(P)H-hydrate epimerase.